We begin with the raw amino-acid sequence, 164 residues long: Flavodoxin (164 aa).

The Flavodoxin-like domain occupies Ile4 to Lys160.

This sequence belongs to the flavodoxin family. FMN is required as a cofactor.

Functionally, low-potential electron donor to a number of redox enzymes. The protein is Flavodoxin (fldA) of Helicobacter pylori (strain ATCC 700392 / 26695) (Campylobacter pylori).